A 184-amino-acid chain; its full sequence is CASP-like protein 1U1 (184 aa).

Residues 1–30 (MSSTGTTLSASEGDKGFRNGAAPAKSKSHS) are Cytoplasmic-facing. Residues 31-51 (TIALLRLLAFAATLSAFVTMI) form a helical membrane-spanning segment. Topologically, residues 52–76 (TNKQKITIGPFTRWSKWHYSDAFMW) are extracellular. Residues 77–97 (FVVANCIAFIYLLFAAILGLI) form a helical membrane-spanning segment. Residues 98-111 (SHSPMLVKHLVILD) lie on the Cytoplasmic side of the membrane. A helical transmembrane segment spans residues 112-132 (LIVSYMLFSAASAATAVAYIG). The Extracellular portion of the chain corresponds to 133–154 (KNGISQPGWTAICGVFERYCHH). Residues 155–175 (VAGALVACFLGWLFLTIAVFL) form a helical membrane-spanning segment. Residues 176–184 (GMRRSPAAV) are Cytoplasmic-facing.

This sequence belongs to the Casparian strip membrane proteins (CASP) family. As to quaternary structure, homodimer and heterodimers.

The protein localises to the cell membrane. The protein is CASP-like protein 1U1 of Marchantia polymorpha (Common liverwort).